The sequence spans 126 residues: Desulfoferrodoxin (126 aa).

Fe cation is bound by residues Cys10, Cys13, Cys29, Cys30, His49, His69, His75, Cys116, and His119.

It belongs to the desulfoferrodoxin family. Homodimer. Fe(3+) serves as cofactor. The cofactor is Cu(2+).

The enzyme catalyses reduced [rubredoxin] + superoxide + 2 H(+) = oxidized [rubredoxin] + H2O2. Its function is as follows. Catalyzes the one-electron reduction of superoxide anion radical to hydrogen peroxide at a nonheme ferrous iron center. Plays a fundamental role in case of oxidative stress via its superoxide detoxification activity. The chain is Desulfoferrodoxin (dfx) from Nitratidesulfovibrio vulgaris (strain ATCC 29579 / DSM 644 / CCUG 34227 / NCIMB 8303 / VKM B-1760 / Hildenborough) (Desulfovibrio vulgaris).